Reading from the N-terminus, the 234-residue chain is MDSVRPLWLMLLSLLLVGTALGDASQAPPGNNAEICLLPPDDGPCRARIPSYYYDRYTQSCREFMYGGCEGNANNFETLEACNEACWKIEKVPKICRLKVNKKQCGELREQYFFNLSSMTCKKFISGGCHSNENRFPDEATCMDFCAPKRAPVFCYSPKDEGLCSANVTRYYFNPRHKACEAFNYTGCGGNDNNFVNLKDCKRTCVKALKKEKNKKMPRLLLANRRLKIKKKQF.

The signal sequence occupies residues 1–22 (MDSVRPLWLMLLSLLLVGTALG). 3 BPTI/Kunitz inhibitor domains span residues 36–86 (CLLP…NEAC), 96–146 (CRLK…MDFC), and 155–205 (CYSP…KRTC). 9 cysteine pairs are disulfide-bonded: cysteine 36-cysteine 86, cysteine 45-cysteine 69, cysteine 61-cysteine 82, cysteine 96-cysteine 146, cysteine 105-cysteine 129, cysteine 121-cysteine 142, cysteine 155-cysteine 205, cysteine 164-cysteine 188, and cysteine 180-cysteine 201. The N-linked (GlcNAc...) asparagine glycan is linked to asparagine 115. Asparagine 167 and asparagine 184 each carry an N-linked (GlcNAc...) asparagine glycan.

Finds in a complex with ABCB1, TFPI2 and PPP2R3C; leading to the dephosphorylation of ABCB1.

Its subcellular location is the secreted. Its function is as follows. May play a role in the regulation of plasmin-mediated matrix remodeling. Inhibits trypsin, plasmin, factor VIIa/tissue factor and weakly factor Xa. Has no effect on thrombin. This Bos taurus (Bovine) protein is Tissue factor pathway inhibitor 2 (TFPI2).